The chain runs to 87 residues: Small ribosomal subunit protein uS17 (87 aa).

It belongs to the universal ribosomal protein uS17 family. Part of the 30S ribosomal subunit.

One of the primary rRNA binding proteins, it binds specifically to the 5'-end of 16S ribosomal RNA. The protein is Small ribosomal subunit protein uS17 of Chromobacterium violaceum (strain ATCC 12472 / DSM 30191 / JCM 1249 / CCUG 213 / NBRC 12614 / NCIMB 9131 / NCTC 9757 / MK).